The chain runs to 200 residues: ATP synthase subunit b 2 (200 aa).

The span at 1-16 shows a compositional bias: polar residues; the sequence is MAEQNILTTPSPNADT. Positions 1 to 38 are disordered; sequence MAEQNILTTPSPNADTTIVPPGSPHTHTEQPSGGHGGA. The helical transmembrane segment at 46 to 66 threads the bilayer; sequence TFLAQLIWLALAFGLLYYLMS.

It belongs to the ATPase B chain family. In terms of assembly, F-type ATPases have 2 components, F(1) - the catalytic core - and F(0) - the membrane proton channel. F(1) has five subunits: alpha(3), beta(3), gamma(1), delta(1), epsilon(1). F(0) has three main subunits: a(1), b(2) and c(10-14). The alpha and beta chains form an alternating ring which encloses part of the gamma chain. F(1) is attached to F(0) by a central stalk formed by the gamma and epsilon chains, while a peripheral stalk is formed by the delta and b chains.

It localises to the cell inner membrane. F(1)F(0) ATP synthase produces ATP from ADP in the presence of a proton or sodium gradient. F-type ATPases consist of two structural domains, F(1) containing the extramembraneous catalytic core and F(0) containing the membrane proton channel, linked together by a central stalk and a peripheral stalk. During catalysis, ATP synthesis in the catalytic domain of F(1) is coupled via a rotary mechanism of the central stalk subunits to proton translocation. Its function is as follows. Component of the F(0) channel, it forms part of the peripheral stalk, linking F(1) to F(0). The b'-subunit is a diverged and duplicated form of b found in plants and photosynthetic bacteria. This Methylorubrum populi (strain ATCC BAA-705 / NCIMB 13946 / BJ001) (Methylobacterium populi) protein is ATP synthase subunit b 2 (atpF2).